The following is a 169-amino-acid chain: Ribosome maturation factor RimM (169 aa).

Positions 96 to 169 (DGEYYWADLI…RILVDWGLDY (74 aa)) constitute a PRC barrel domain.

Belongs to the RimM family. Binds ribosomal protein uS19.

It is found in the cytoplasm. Functionally, an accessory protein needed during the final step in the assembly of 30S ribosomal subunit, possibly for assembly of the head region. Essential for efficient processing of 16S rRNA. May be needed both before and after RbfA during the maturation of 16S rRNA. It has affinity for free ribosomal 30S subunits but not for 70S ribosomes. The protein is Ribosome maturation factor RimM of Chromobacterium violaceum (strain ATCC 12472 / DSM 30191 / JCM 1249 / CCUG 213 / NBRC 12614 / NCIMB 9131 / NCTC 9757 / MK).